A 424-amino-acid chain; its full sequence is F-box protein At2g38590 (424 aa).

An F-box domain is found at 2 to 47 (TTMISNLPRVLIEEIFFRVPLKSLRAVRLTCKSWNTLSKSRSFRKL).

The protein is F-box protein At2g38590 of Arabidopsis thaliana (Mouse-ear cress).